A 636-amino-acid chain; its full sequence is 1-deoxy-D-xylulose-5-phosphate synthase (636 aa).

Thiamine diphosphate is bound by residues H75 and 116–118 (AHS). D147 lines the Mg(2+) pocket. Residues 148–149 (GA), N177, Y288, and E370 each bind thiamine diphosphate. N177 serves as a coordination point for Mg(2+).

This sequence belongs to the transketolase family. DXPS subfamily. In terms of assembly, homodimer. The cofactor is Mg(2+). It depends on thiamine diphosphate as a cofactor.

The enzyme catalyses D-glyceraldehyde 3-phosphate + pyruvate + H(+) = 1-deoxy-D-xylulose 5-phosphate + CO2. It participates in metabolic intermediate biosynthesis; 1-deoxy-D-xylulose 5-phosphate biosynthesis; 1-deoxy-D-xylulose 5-phosphate from D-glyceraldehyde 3-phosphate and pyruvate: step 1/1. In terms of biological role, catalyzes the acyloin condensation reaction between C atoms 2 and 3 of pyruvate and glyceraldehyde 3-phosphate to yield 1-deoxy-D-xylulose-5-phosphate (DXP). The protein is 1-deoxy-D-xylulose-5-phosphate synthase of Ralstonia pickettii (strain 12J).